Consider the following 162-residue polypeptide: Putative 4-hydroxy-4-methyl-2-oxoglutarate aldolase (162 aa).

Substrate-binding positions include 75 to 78 (GDML) and R97. D98 serves as a coordination point for a divalent metal cation.

The protein belongs to the class II aldolase/RraA-like family. As to quaternary structure, homotrimer. Requires a divalent metal cation as cofactor.

It catalyses the reaction 4-hydroxy-4-methyl-2-oxoglutarate = 2 pyruvate. The catalysed reaction is oxaloacetate + H(+) = pyruvate + CO2. In terms of biological role, catalyzes the aldol cleavage of 4-hydroxy-4-methyl-2-oxoglutarate (HMG) into 2 molecules of pyruvate. Also contains a secondary oxaloacetate (OAA) decarboxylase activity due to the common pyruvate enolate transition state formed following C-C bond cleavage in the retro-aldol and decarboxylation reactions. This Stutzerimonas stutzeri (strain A1501) (Pseudomonas stutzeri) protein is Putative 4-hydroxy-4-methyl-2-oxoglutarate aldolase.